A 341-amino-acid chain; its full sequence is S-adenosylmethionine:tRNA ribosyltransferase-isomerase (341 aa).

This sequence belongs to the QueA family. In terms of assembly, monomer.

The protein localises to the cytoplasm. The enzyme catalyses 7-aminomethyl-7-carbaguanosine(34) in tRNA + S-adenosyl-L-methionine = epoxyqueuosine(34) in tRNA + adenine + L-methionine + 2 H(+). Its pathway is tRNA modification; tRNA-queuosine biosynthesis. Its function is as follows. Transfers and isomerizes the ribose moiety from AdoMet to the 7-aminomethyl group of 7-deazaguanine (preQ1-tRNA) to give epoxyqueuosine (oQ-tRNA). The polypeptide is S-adenosylmethionine:tRNA ribosyltransferase-isomerase (Clostridium tetani (strain Massachusetts / E88)).